Reading from the N-terminus, the 231-residue chain is Casparian strip membrane protein 1 (231 aa).

At 1 to 69 (MSTSETATVI…FRQSDRGSRC (69 aa)) the chain is on the cytoplasmic side. The chain crosses the membrane as a helical span at residues 70-90 (LAFLDFLLRIAAFGPALAAAI). Residues 91 to 117 (ATGTSDETLSVFTEFFQFRARFDDFPA) lie on the Extracellular side of the membrane. A helical membrane pass occupies residues 118–138 (FLFLMVANAIAAGYLVLSLPF). At 139-152 (SAVVVLRPQATGLR) the chain is on the cytoplasmic side. Residues 153 to 173 (LLLLVCDTIMIGLLTAAAAAA) form a helical membrane-spanning segment. Residues 174–207 (AAIVELAHNGNERANWVAICMQFHGFCQRTSGAV) lie on the Extracellular side of the membrane. Residues 208-228 (VASFLSVFLFLLLVVLAAFAI) traverse the membrane as a helical segment. The Cytoplasmic portion of the chain corresponds to 229 to 231 (RKR).

Belongs to the Casparian strip membrane proteins (CASP) family. Homodimer and heterodimers.

Its subcellular location is the cell membrane. Regulates membrane-cell wall junctions and localized cell wall deposition. Required for establishment of the Casparian strip membrane domain (CSD) and the subsequent formation of Casparian strips, a cell wall modification of the root endodermis that determines an apoplastic barrier between the intraorganismal apoplasm and the extraorganismal apoplasm and prevents lateral diffusion. The sequence is that of Casparian strip membrane protein 1 from Brachypodium distachyon (Purple false brome).